The following is a 218-amino-acid chain: Ribose-5-phosphate isomerase A (218 aa).

Residues 28–31 (SGST), 81–84 (DGAD), and 94–97 (KGKG) each bind substrate. The Proton acceptor role is filled by E103. Position 121 (K121) interacts with substrate.

Belongs to the ribose 5-phosphate isomerase family. Homodimer.

It catalyses the reaction aldehydo-D-ribose 5-phosphate = D-ribulose 5-phosphate. Its pathway is carbohydrate degradation; pentose phosphate pathway; D-ribose 5-phosphate from D-ribulose 5-phosphate (non-oxidative stage): step 1/1. In terms of biological role, catalyzes the reversible conversion of ribose-5-phosphate to ribulose 5-phosphate. The polypeptide is Ribose-5-phosphate isomerase A (Wigglesworthia glossinidia brevipalpis).